The chain runs to 74 residues: UPF0352 protein HAPS_0210 (74 aa).

This sequence belongs to the UPF0352 family.

The chain is UPF0352 protein HAPS_0210 from Glaesserella parasuis serovar 5 (strain SH0165) (Haemophilus parasuis).